A 358-amino-acid chain; its full sequence is DNA polymerase IV (358 aa).

One can recognise a UmuC domain in the interval 4–185 (IIHIDMDCYF…LSLRKIPGVG (182 aa)). Residues D8 and D103 each contribute to the Mg(2+) site. The active site involves E104.

Belongs to the DNA polymerase type-Y family. Monomer. It depends on Mg(2+) as a cofactor.

Its subcellular location is the cytoplasm. The catalysed reaction is DNA(n) + a 2'-deoxyribonucleoside 5'-triphosphate = DNA(n+1) + diphosphate. In terms of biological role, poorly processive, error-prone DNA polymerase involved in untargeted mutagenesis. Copies undamaged DNA at stalled replication forks, which arise in vivo from mismatched or misaligned primer ends. These misaligned primers can be extended by PolIV. Exhibits no 3'-5' exonuclease (proofreading) activity. May be involved in translesional synthesis, in conjunction with the beta clamp from PolIII. The protein is DNA polymerase IV of Shewanella baltica (strain OS155 / ATCC BAA-1091).